Consider the following 465-residue polypeptide: UDP-N-acetylmuramate--L-alanine ligase (465 aa).

112-118 (GTHGKTT) serves as a coordination point for ATP.

Belongs to the MurCDEF family.

It is found in the cytoplasm. The enzyme catalyses UDP-N-acetyl-alpha-D-muramate + L-alanine + ATP = UDP-N-acetyl-alpha-D-muramoyl-L-alanine + ADP + phosphate + H(+). It functions in the pathway cell wall biogenesis; peptidoglycan biosynthesis. Its function is as follows. Cell wall formation. The polypeptide is UDP-N-acetylmuramate--L-alanine ligase (Burkholderia ambifaria (strain ATCC BAA-244 / DSM 16087 / CCUG 44356 / LMG 19182 / AMMD) (Burkholderia cepacia (strain AMMD))).